The primary structure comprises 127 residues: NADPH-dependent 7-cyano-7-deazaguanine reductase (127 aa).

The Thioimide intermediate role is filled by Cys-40. The active-site Proton donor is Asp-47. Substrate contacts are provided by residues 62–64 (VEL) and 81–82 (HE).

It belongs to the GTP cyclohydrolase I family. QueF type 1 subfamily.

It localises to the cytoplasm. The catalysed reaction is 7-aminomethyl-7-carbaguanine + 2 NADP(+) = 7-cyano-7-deazaguanine + 2 NADPH + 3 H(+). Its pathway is tRNA modification; tRNA-queuosine biosynthesis. Catalyzes the NADPH-dependent reduction of 7-cyano-7-deazaguanine (preQ0) to 7-aminomethyl-7-deazaguanine (preQ1). The protein is NADPH-dependent 7-cyano-7-deazaguanine reductase of Campylobacter lari (strain RM2100 / D67 / ATCC BAA-1060).